A 206-amino-acid chain; its full sequence is Large ribosomal subunit protein uL4 (206 aa).

Residues 42–54 show a composition bias toward polar residues; it reads RRQQGTHQSQGRS. A disordered region spans residues 42–93; sequence RRQQGTHQSQGRSDVSRTGAKMFKQKGTGRARHSSARAPQFRGGGKAHGPVV. The segment covering 64–76 has biased composition (basic residues); the sequence is FKQKGTGRARHSS.

Belongs to the universal ribosomal protein uL4 family. Part of the 50S ribosomal subunit.

One of the primary rRNA binding proteins, this protein initially binds near the 5'-end of the 23S rRNA. It is important during the early stages of 50S assembly. It makes multiple contacts with different domains of the 23S rRNA in the assembled 50S subunit and ribosome. In terms of biological role, forms part of the polypeptide exit tunnel. The polypeptide is Large ribosomal subunit protein uL4 (Bartonella henselae (strain ATCC 49882 / DSM 28221 / CCUG 30454 / Houston 1) (Rochalimaea henselae)).